The primary structure comprises 450 residues: Phosphoglucosamine mutase (450 aa).

Ser101 acts as the Phosphoserine intermediate in catalysis. Mg(2+) contacts are provided by Ser101, Asp240, Asp242, and Asp244. Residue Ser101 is modified to Phosphoserine.

This sequence belongs to the phosphohexose mutase family. It depends on Mg(2+) as a cofactor. Activated by phosphorylation.

The enzyme catalyses alpha-D-glucosamine 1-phosphate = D-glucosamine 6-phosphate. Functionally, catalyzes the conversion of glucosamine-6-phosphate to glucosamine-1-phosphate. This Streptococcus pneumoniae (strain JJA) protein is Phosphoglucosamine mutase.